The chain runs to 302 residues: Enolase-phosphatase E1 (302 aa).

Over residues 1 to 10 the composition is skewed to basic residues; that stretch reads MSDSRLRRRQ. The segment at 1 to 25 is disordered; it reads MSDSRLRRRQGTAGTDNKRRADGPH. Residues 16-25 show a composition bias toward basic and acidic residues; sequence DNKRRADGPH. Positions 40 and 42 each coordinate Mg(2+). Residues 183-184 and Lys217 contribute to the substrate site; that span reads SS. Position 242 (Asp242) interacts with Mg(2+).

It belongs to the HAD-like hydrolase superfamily. MasA/MtnC family. As to quaternary structure, monomer. Mg(2+) serves as cofactor.

Its subcellular location is the cytoplasm. The protein resides in the nucleus. The enzyme catalyses 5-methylsulfanyl-2,3-dioxopentyl phosphate + H2O = 1,2-dihydroxy-5-(methylsulfanyl)pent-1-en-3-one + phosphate. The protein operates within amino-acid biosynthesis; L-methionine biosynthesis via salvage pathway; L-methionine from S-methyl-5-thio-alpha-D-ribose 1-phosphate: step 3/6. It functions in the pathway amino-acid biosynthesis; L-methionine biosynthesis via salvage pathway; L-methionine from S-methyl-5-thio-alpha-D-ribose 1-phosphate: step 4/6. Bifunctional enzyme that catalyzes the enolization of 2,3-diketo-5-methylthiopentyl-1-phosphate (DK-MTP-1-P) into the intermediate 2-hydroxy-3-keto-5-methylthiopentenyl-1-phosphate (HK-MTPenyl-1-P), which is then dephosphorylated to form the acireductone 1,2-dihydroxy-3-keto-5-methylthiopentene (DHK-MTPene). The chain is Enolase-phosphatase E1 from Branchiostoma floridae (Florida lancelet).